The chain runs to 94 residues: Probable small nuclear ribonucleoprotein E (94 aa).

The region spanning 17–92 (INLIFRYLQN…ITLIQNVSPT (76 aa)) is the Sm domain.

Belongs to the snRNP Sm proteins family. Core component of the spliceosomal U1, U2, U4 and U5 small nuclear ribonucleoproteins (snRNPs), the building blocks of the spliceosome. Interacts with the SMN complex.

The protein resides in the nucleus. Its subcellular location is the cytoplasm. It localises to the cytosol. In terms of biological role, plays a role in pre-mRNA splicing as a core component of the spliceosomal U1, U2, U4 and U5 small nuclear ribonucleoproteins (snRNPs), the building blocks of the spliceosome. This chain is Probable small nuclear ribonucleoprotein E (SmE), found in Drosophila melanogaster (Fruit fly).